The sequence spans 1243 residues: Serine/threonine-protein kinase WNK4 (1243 aa).

A compositionally biased stretch (polar residues) spans 1–17; sequence MLASPATETTVLMSQTE. Residues 1 to 142 form a disordered region; the sequence is MLASPATETT…GPGSREPLRV (142 aa). Positions 65 to 77 are enriched in low complexity; sequence VDLGLLSSWSLPA. Pro residues predominate over residues 78 to 103; that stretch reads SPAPDPPDPPDSAGPGPARSPPPSSK. Position 97 is a phosphoserine (S97). Over residues 118–127 the composition is skewed to basic and acidic residues; that stretch reads AAEDSARPEL. Residues K157 and K175 each participate in a glycyl lysine isopeptide (Lys-Gly) (interchain with G-Cter in ubiquitin) cross-link. In terms of domain architecture, Protein kinase spans 174-432; the sequence is LKFDIEIGRG…IQDLLAHAFF (259 aa). An ATP-binding site is contributed by S184. Glycyl lysine isopeptide (Lys-Gly) (interchain with G-Cter in ubiquitin) cross-links involve residues K186, K226, and K241. ATP is bound by residues 254–257 and K304; that span reads TELM. The Proton acceptor role is filled by D321. K328 is covalently cross-linked (Glycyl lysine isopeptide (Lys-Gly) (interchain with G-Cter in ubiquitin)). A phosphoserine; by autocatalysis mark is found at S331 and S335. Glycyl lysine isopeptide (Lys-Gly) (interchain with G-Cter in ubiquitin) cross-links involve residues K387, K393, K450, and K454. The tract at residues 526–564 is disordered; the sequence is KARELEALPPEPGPPPATVPMAPGPPSVFPPEPEEPEAD. The segment covering 534–556 has biased composition (pro residues); it reads PPEPGPPPATVPMAPGPPSVFPP. The tract at residues 557–567 is interaction with KLHL3; the sequence is EPEEPEADQHQ. At S575 the chain carries Phosphoserine. The span at 630–641 shows a compositional bias: low complexity; sequence SGPGSDFSPGDS. 3 disordered regions span residues 630-683, 751-871, and 943-1110; these read SGPG…SVSD, DTGP…STPE, and SPSP…SPVW. A compositionally biased stretch (basic residues) spans 663–676; that stretch reads PPGRNLRRRPRSRL. A compositionally biased stretch (pro residues) spans 767–780; it reads EPAPLPALPVPLPD. Positions 797 to 812 are enriched in low complexity; it reads WTAFSTSSSSPGTPLS. The span at 822–843 shows a compositional bias: pro residues; it reads PISPGPIFPITSPPCHPSPSPF. Low complexity-rich tracts occupy residues 844-854, 862-871, and 943-952; these read SPISSQVSSNP, PLPFSSSTPE, and SPSPGLLSQS. A compositionally biased stretch (pro residues) spans 953–970; the sequence is PPAPPSPLPSLPLPPPVA. K1010 participates in a covalent cross-link: Glycyl lysine isopeptide (Lys-Gly) (interchain with G-Cter in ubiquitin). The short motif at 1016-1019 is the RFXV motif element; that stretch reads RFQV. Residue S1035 is modified to Phosphoserine. Residues 1065–1077 are compositionally biased toward basic and acidic residues; it reads ETREALAESDRAA. Glycyl lysine isopeptide (Lys-Gly) (interchain with G-Cter in ubiquitin) cross-links involve residues K1144, K1157, and K1158. Residues 1166–1243 form a disordered region; sequence RLGKQPPPGI…VTFAGDVGRM (78 aa). Composition is skewed to polar residues over residues 1193–1204 and 1216–1228; these read SFPTSRRNSLQR and NSLS…SQEQ. At S1217 the chain carries Phosphoserine.

It belongs to the protein kinase superfamily. Ser/Thr protein kinase family. WNK subfamily. As to quaternary structure, interacts with the C-terminal region of KCNJ1. Mg(2+) is required as a cofactor. Autophosphorylated at Ser-331 and Ser-335, promoting its activation. Phosphorylated by WNK1 and WNK3. Phosphorylated at Ser-575 in a MAP3K15/ASK3-dependent process in response to osmotic stress or hypotonic low-chloride stimulation. Post-translationally, ubiquitinated by the BCR(KLHL3) complex, leading to its degradation. Also ubiquitinated by the BCR(KLHL2) complex. Expressed in kidney, colon and skin.

It localises to the cell junction. The protein localises to the tight junction. It carries out the reaction L-seryl-[protein] + ATP = O-phospho-L-seryl-[protein] + ADP + H(+). It catalyses the reaction L-threonyl-[protein] + ATP = O-phospho-L-threonyl-[protein] + ADP + H(+). With respect to regulation, activation requires autophosphorylation of Ser-331 and Ser-335. Autophosphorylation and subsequent activation is inhibited by increases in intracellular ionic strength: Cl(-) potently inhibits WNK4 kinase activity via direct binding. Also inhibited by K(+) ions. In terms of biological role, serine/threonine-protein kinase component of the WNK4-SPAK/OSR1 kinase cascade, which acts as a key regulator of ion transport in the distal nephron and blood pressure. The WNK4-SPAK/OSR1 kinase cascade is composed of WNK4, which mediates phosphorylation and activation of downstream kinases OXSR1/OSR1 and STK39/SPAK. Following activation, OXSR1/OSR1 and STK39/SPAK catalyze phosphorylation of ion cotransporters, such as SLC12A1/NKCC2, SLC12A2/NKCC1, SLC12A3/NCC, SLC12A5/KCC2 or SLC12A6/KCC3, regulating their activity. Acts as a molecular switch that regulates the balance between renal salt reabsorption and K(+) secretion by modulating the activities of renal transporters and channels, including the Na-Cl cotransporter SLC12A3/NCC and the K(+) channel, KCNJ1/ROMK. Regulates NaCl reabsorption in the distal nephron by activating the thiazide-sensitive Na-Cl cotransporter SLC12A3/NCC in distal convoluted tubule cells of kidney: activates SLC12A3/NCC in a OXSR1/OSR1- and STK39/SPAK-dependent process. Also acts as a scaffold protein independently of its protein kinase activity: negatively regulates cell membrane localization of various transporters and channels (CFTR, KCNJ1/ROMK, SLC4A4, SLC26A9 and TRPV4) by clathrin-dependent endocytosis. Also inhibits the activity of the epithelial Na(+) channel (ENaC) SCNN1A, SCNN1B, SCNN1D in a inase-independent mechanism. May also phosphorylate NEDD4L. The polypeptide is Serine/threonine-protein kinase WNK4 (Homo sapiens (Human)).